The sequence spans 594 residues: Aspartate--tRNA(Asp/Asn) ligase (594 aa).

Glu-175 contacts L-aspartate. Positions 199–202 are aspartate; that stretch reads QLFK. Arg-221 contacts L-aspartate. ATP-binding positions include 221 to 223 and Gln-230; that span reads RDE. His-446 is a binding site for L-aspartate. An ATP-binding site is contributed by Glu-492. Arg-499 contributes to the L-aspartate binding site. 544–547 provides a ligand contact to ATP; it reads GFDR.

The protein belongs to the class-II aminoacyl-tRNA synthetase family. Type 1 subfamily. In terms of assembly, homodimer.

The protein resides in the cytoplasm. The catalysed reaction is tRNA(Asx) + L-aspartate + ATP = L-aspartyl-tRNA(Asx) + AMP + diphosphate. Functionally, aspartyl-tRNA synthetase with relaxed tRNA specificity since it is able to aspartylate not only its cognate tRNA(Asp) but also tRNA(Asn). Reaction proceeds in two steps: L-aspartate is first activated by ATP to form Asp-AMP and then transferred to the acceptor end of tRNA(Asp/Asn). The polypeptide is Aspartate--tRNA(Asp/Asn) ligase (Hydrogenobaculum sp. (strain Y04AAS1)).